Consider the following 354-residue polypeptide: DNA polymerase IV (354 aa).

Residues 6–187 (IIHIDCDCFY…LPVARLHGVG (182 aa)) enclose the UmuC domain. Residues aspartate 10 and aspartate 105 each coordinate Mg(2+). The active site involves glutamate 106.

It belongs to the DNA polymerase type-Y family. As to quaternary structure, monomer. It depends on Mg(2+) as a cofactor.

The protein localises to the cytoplasm. The catalysed reaction is DNA(n) + a 2'-deoxyribonucleoside 5'-triphosphate = DNA(n+1) + diphosphate. Functionally, poorly processive, error-prone DNA polymerase involved in untargeted mutagenesis. Copies undamaged DNA at stalled replication forks, which arise in vivo from mismatched or misaligned primer ends. These misaligned primers can be extended by PolIV. Exhibits no 3'-5' exonuclease (proofreading) activity. May be involved in translesional synthesis, in conjunction with the beta clamp from PolIII. In Pseudomonas entomophila (strain L48), this protein is DNA polymerase IV.